The chain runs to 520 residues: MARFALVLHAHLPYVRAHGMWPFGEETLYEAMAETYLPLIRVLERLRAEGVEAPFTLGITPILAEQLADARIKEGFWAYAKDRLERAQGDYQRYRGTALEASARHQVAFWELTLDHFQRLSGDLVAAFRKAEEGGQVELITSNATHGYSPLLGYDEALWAQIKTGVSTYRRHFAKDPTGFWLPEMAYRPKGPWKPPVEGPPEGVRPGVDELLMRAGIRYTFVDAHLVQGGEPLSPYGEAALGPVESQEATYHVHELESGLRVLARNPETTLQVWSADYGYPGEGLYREFHRKDPLSGLHHWRVTHRKADLAEKAPYDPEAAFAKTEEHARHFVGLLERLAGRHPEGVILSPYDAELFGHWWYEGVAWLEAVLRLLAQNPKVRPVTAREAVQGPAVRTALPEGSWGRGGDHRVWLNEKTLDYWEKVYRAEGAMREAARRGVLPEGVLRQAMRELLLLEASDWPFLMETGQAEAYARERYEEHARAFFHLLKGASPEELRALEERDNPFPEADPRLYLFREA.

Glutamate 184 (nucleophile) is an active-site residue. Substrate-binding residues include arginine 265 and glycine 282. Residue aspartate 353 is the Proton donor of the active site. Substrate contacts are provided by tryptophan 404, aspartate 460, and glutamine 469.

It belongs to the glycosyl hydrolase 57 family.

It carries out the reaction Transfers a segment of a (1-&gt;4)-alpha-D-glucan chain to a primary hydroxy group in a similar glucan chain.. Its pathway is glycan biosynthesis; glycogen biosynthesis. Functionally, catalyzes the formation of branch points in alpha-glucans by cleavage of an alpha-1,4 glycosidic bond and subsequent transfer of the cleaved-off oligosaccharide to a new alpha-1,6 position. The branch chain-length distribution of the reaction products shows degree of polymerization (DP) of 3 to 13, with two local maxima at DP 7 and DP 11. Exhibits an alpha-retaining catalytic mechanism. Is involved in glycogen biosynthesis. Shows a secondary activity, i.e. the hydrolysis of the substrate, being 4% of the total activity. Can use amylose as substrate but not alpha-1,4-linked oligosaccharides of 2-7 glucose residues, beta-cyclodextrin, 6-O-glucosyl-beta-cyclodextrin and 6-O-maltosyl-beta-cyclodextrin. Is not able to branch amylopectin further, it only hydrolyzes amylopectin. Thus, displays preference for linear and long substrates (amylose) over branched structures (amylopectin). The polypeptide is 1,4-alpha-glucan branching enzyme TTHA1902 (Thermus thermophilus (strain ATCC 27634 / DSM 579 / HB8)).